Reading from the N-terminus, the 242-residue chain is Succinyl-CoA:3-ketoacid coenzyme A transferase subunit A (242 aa).

33-39 (GGFGLCG) lines the CoA pocket.

Belongs to the 3-oxoacid CoA-transferase subunit A family. As to quaternary structure, heterodimer of a subunit A and a subunit B.

It catalyses the reaction a 3-oxo acid + succinyl-CoA = a 3-oxoacyl-CoA + succinate. It functions in the pathway bacterial outer membrane biogenesis; lipopolysaccharide biosynthesis. The chain is Succinyl-CoA:3-ketoacid coenzyme A transferase subunit A (lpsI) from Xanthomonas campestris pv. campestris (strain B100).